The chain runs to 461 residues: Photosystem II CP43 reaction center protein (461 aa).

A propeptide spanning residues 1–2 is cleaved from the precursor; it reads ME. Residue T3 is modified to N-acetylthreonine. Position 3 is a phosphothreonine (T3). A run of 5 helical transmembrane segments spans residues 57–81, 122–143, 166–188, 243–263, and 279–300; these read LFEVAHFVPEKPMYEQGLILLPHLA, LLGPETLEESFPFFGYVWKDRN, KASYFGGIYDTWAPGGGDVRKIT, KPFAWARRALVWSGEAYLSYS, and WFNNTAYPSEFYGPTGPEASQA. Position 355 (E355) interacts with [CaMn4O5] cluster. The chain crosses the membrane as a helical span at residues 435–459; the sequence is RARAAAAGFEKGIDRDFEPVLSMTP.

Belongs to the PsbB/PsbC family. PsbC subfamily. PSII is composed of 1 copy each of membrane proteins PsbA, PsbB, PsbC, PsbD, PsbE, PsbF, PsbH, PsbI, PsbJ, PsbK, PsbL, PsbM, PsbT, PsbX, PsbY, PsbZ, Psb30/Ycf12, at least 3 peripheral proteins of the oxygen-evolving complex and a large number of cofactors. It forms dimeric complexes. Binds multiple chlorophylls and provides some of the ligands for the Ca-4Mn-5O cluster of the oxygen-evolving complex. It may also provide a ligand for a Cl- that is required for oxygen evolution. PSII binds additional chlorophylls, carotenoids and specific lipids. serves as cofactor.

It localises to the plastid. It is found in the chloroplast thylakoid membrane. One of the components of the core complex of photosystem II (PSII). It binds chlorophyll and helps catalyze the primary light-induced photochemical processes of PSII. PSII is a light-driven water:plastoquinone oxidoreductase, using light energy to abstract electrons from H(2)O, generating O(2) and a proton gradient subsequently used for ATP formation. The protein is Photosystem II CP43 reaction center protein of Lotus japonicus (Lotus corniculatus var. japonicus).